Reading from the N-terminus, the 471-residue chain is Pneumolysin (471 aa).

The next 4 membrane-spanning stretches (beta stranded) occupy residues 158 to 171 (MEQLKVKFGSDFEK), 178 to 187 (IDFNSVHSGE), 256 to 265 (SDEVEAAFEA), and 273 to 285 (APQTEWKQILDNT). The Conserved undecapeptide signature appears at 427–437 (ECTGLAWEWWR). The short motif at 459–460 (TL) is the Cholesterol binding element.

This sequence belongs to the cholesterol-dependent cytolysin family. Elongated monomers align along their lengths, indicating intersubunit contacts and suggesting the prepore structure. Modeling based on cryo-EM shows a homooligomeric pore complex containing 38-44 subunits; when inserted in the host membrane. The size of isolated pores is detergent-dependent; in amphipol A8-35 homogenous rings form with 42 subunits.

It is found in the secreted. The protein localises to the host cell membrane. With respect to regulation, erythrocytes hemolysis is inhibited by cholesterol. A cholesterol-dependent toxin that causes cytolysis by forming pores in cholesterol-containing host membranes. After binding to target membranes, the protein undergoes a major conformation change, leading to its insertion in the host membrane and formation of an oligomeric pore complex. Cholesterol is required for binding to host membranes, membrane insertion and pore formation; cholesterol binding is mediated by a Thr-Leu pair in the C-terminus. Can be reversibly inactivated by oxidation. This is Pneumolysin (ply) from Streptococcus pneumoniae serotype 2 (strain D39 / NCTC 7466).